The chain runs to 1018 residues: Serine/threonine-protein phosphatase BSL2 (1018 aa).

The disordered stretch occupies residues 1–75 (MDEDSSMVAD…AAAVVGQEQQ (75 aa)). Over residues 41 to 57 (SPPPEGGSVPTPPPSDP) the composition is skewed to pro residues. Over residues 63 to 75 (QQQAAAVVGQEQQ) the composition is skewed to low complexity. 5 Kelch repeats span residues 149-195 (TSAG…VATA), 253-301 (YLMA…TASA), 306-356 (LLLL…VFVN), 362-409 (SGGA…DAAG), and 430-479 (LIFI…RLPG). A disordered region spans residues 569–590 (DRDCGAEATPSGKPTFSLIKPD). S627 is modified (phosphoserine). Residues D720, H722, D754, and N786 each contribute to the Mn(2+) site. H787 acts as the Proton donor in catalysis. Positions 839 and 918 each coordinate Mn(2+). S975 is subject to Phosphoserine. Residues 994-1011 (ANRPATPTRGRPQNSNDR) are compositionally biased toward polar residues. Residues 994 to 1018 (ANRPATPTRGRPQNSNDRGGSLAWM) are disordered.

It belongs to the PPP phosphatase family. BSU subfamily. As to quaternary structure, interacts with BSK8. Requires Mn(2+) as cofactor. As to expression, expressed throughout the plant, with a higher level in younger parts.

It localises to the cytoplasm. The protein localises to the cell membrane. It is found in the nucleus. The catalysed reaction is O-phospho-L-seryl-[protein] + H2O = L-seryl-[protein] + phosphate. It catalyses the reaction O-phospho-L-threonyl-[protein] + H2O = L-threonyl-[protein] + phosphate. In terms of biological role, phosphatase involved in elongation process, probably by acting as a regulator of brassinolide signaling. This chain is Serine/threonine-protein phosphatase BSL2 (BSL2), found in Arabidopsis thaliana (Mouse-ear cress).